A 159-amino-acid chain; its full sequence is Ribosomal RNA large subunit methyltransferase H (159 aa).

S-adenosyl-L-methionine is bound by residues leucine 76, glycine 108, and 127 to 132 (FGRLTY).

Belongs to the RNA methyltransferase RlmH family. In terms of assembly, homodimer.

It is found in the cytoplasm. It carries out the reaction pseudouridine(1915) in 23S rRNA + S-adenosyl-L-methionine = N(3)-methylpseudouridine(1915) in 23S rRNA + S-adenosyl-L-homocysteine + H(+). Functionally, specifically methylates the pseudouridine at position 1915 (m3Psi1915) in 23S rRNA. The protein is Ribosomal RNA large subunit methyltransferase H of Enterococcus faecalis (strain ATCC 700802 / V583).